We begin with the raw amino-acid sequence, 207 residues long: Acyl-homoserine-lactone synthase (207 aa).

This sequence belongs to the autoinducer synthase family.

It catalyses the reaction a fatty acyl-[ACP] + S-adenosyl-L-methionine = an N-acyl-L-homoserine lactone + S-methyl-5'-thioadenosine + holo-[ACP] + H(+). In terms of biological role, required for the synthesis of N-butanoyl-L-homoserine lactone (BHL), an autoinducer molecule which binds to AsaR. This Aeromonas salmonicida protein is Acyl-homoserine-lactone synthase (asaI).